Consider the following 456-residue polypeptide: MTLPLHVLILAAGEGKRMRSSLPKVLQPLAGQPMLAHVIATARQLQPAAIHIVYGHGGDQVQAAFADQGDLQWAEQREQLGTGHAVQQAMPAIPDAATVLVLYGDVPLIRSESLLQLLHAPGRMAVLVAELANPTGYGRILRDAEGKVAAIVEQKDANDEQRRIRTINTGILTAESTALRRWLAGLSNDNAQAEFYLTDVFASAAADFTPADMVHVADPQDVEGANDPWQLAQLERAWQLRAARTLCLQGVRMADPARVEQRGSVQVGRDVQLDIDVILEGNVTLGDDVVIGPFVRLRDVTLGAGTQVRAHSDLEGVITEGAVQIGPFARLRPGTVLADGVHIGNFVETKKVTMGVGSKANHLTYLGDAVIGSKVNIGAGTITCNYDGVNKSQTTIGDGAFIGSNSALVAPIQIGANSTIGAGSVITSDAPAGQLSVTRARQTVVEGWKRPTKKSP.

The segment at 1–228 (MTLPLHVLIL…PQDVEGANDP (228 aa)) is pyrophosphorylase. UDP-N-acetyl-alpha-D-glucosamine contacts are provided by residues 10 to 13 (LAAG), Lys24, Gln76, 81 to 82 (GT), 103 to 105 (YGD), Gly138, Glu153, Asn168, and Asn226. Asp105 is a binding site for Mg(2+). Asn226 is a Mg(2+) binding site. The tract at residues 229 to 249 (WQLAQLERAWQLRAARTLCLQ) is linker. Positions 250-456 (GVRMADPARV…GWKRPTKKSP (207 aa)) are N-acetyltransferase. The UDP-N-acetyl-alpha-D-glucosamine site is built by Arg332 and Lys350. His362 (proton acceptor) is an active-site residue. Residues Tyr365 and Asn376 each contribute to the UDP-N-acetyl-alpha-D-glucosamine site. Acetyl-CoA-binding positions include Ala379, 385-386 (NY), Ser404, Ala422, and Arg439.

In the N-terminal section; belongs to the N-acetylglucosamine-1-phosphate uridyltransferase family. The protein in the C-terminal section; belongs to the transferase hexapeptide repeat family. As to quaternary structure, homotrimer. The cofactor is Mg(2+).

The protein resides in the cytoplasm. The enzyme catalyses alpha-D-glucosamine 1-phosphate + acetyl-CoA = N-acetyl-alpha-D-glucosamine 1-phosphate + CoA + H(+). It carries out the reaction N-acetyl-alpha-D-glucosamine 1-phosphate + UTP + H(+) = UDP-N-acetyl-alpha-D-glucosamine + diphosphate. It participates in nucleotide-sugar biosynthesis; UDP-N-acetyl-alpha-D-glucosamine biosynthesis; N-acetyl-alpha-D-glucosamine 1-phosphate from alpha-D-glucosamine 6-phosphate (route II): step 2/2. Its pathway is nucleotide-sugar biosynthesis; UDP-N-acetyl-alpha-D-glucosamine biosynthesis; UDP-N-acetyl-alpha-D-glucosamine from N-acetyl-alpha-D-glucosamine 1-phosphate: step 1/1. It functions in the pathway bacterial outer membrane biogenesis; LPS lipid A biosynthesis. Catalyzes the last two sequential reactions in the de novo biosynthetic pathway for UDP-N-acetylglucosamine (UDP-GlcNAc). The C-terminal domain catalyzes the transfer of acetyl group from acetyl coenzyme A to glucosamine-1-phosphate (GlcN-1-P) to produce N-acetylglucosamine-1-phosphate (GlcNAc-1-P), which is converted into UDP-GlcNAc by the transfer of uridine 5-monophosphate (from uridine 5-triphosphate), a reaction catalyzed by the N-terminal domain. This is Bifunctional protein GlmU from Xanthomonas axonopodis pv. citri (strain 306).